The chain runs to 177 residues: 3-hydroxydecanoyl-[acyl-carrier-protein] dehydratase (177 aa).

Histidine 76 is a catalytic residue.

Belongs to the thioester dehydratase family. FabA subfamily. Homodimer.

The protein resides in the cytoplasm. The enzyme catalyses a (3R)-hydroxyacyl-[ACP] = a (2E)-enoyl-[ACP] + H2O. It catalyses the reaction (3R)-hydroxydecanoyl-[ACP] = (2E)-decenoyl-[ACP] + H2O. It carries out the reaction (2E)-decenoyl-[ACP] = (3Z)-decenoyl-[ACP]. It participates in lipid metabolism; fatty acid biosynthesis. Functionally, necessary for the introduction of cis unsaturation into fatty acids. Catalyzes the dehydration of (3R)-3-hydroxydecanoyl-ACP to E-(2)-decenoyl-ACP and then its isomerization to Z-(3)-decenoyl-ACP. Can catalyze the dehydratase reaction for beta-hydroxyacyl-ACPs with saturated chain lengths up to 16:0, being most active on intermediate chain length. This is 3-hydroxydecanoyl-[acyl-carrier-protein] dehydratase from Haemophilus influenzae (strain PittGG).